The following is a 521-amino-acid chain: NADH-quinone oxidoreductase subunit N (521 aa).

Transmembrane regions (helical) follow at residues 15–35, 43–63, 98–118, 128–148, 150–170, 185–205, 227–247, 261–281, 303–323, 331–351, 363–383, 406–426, 442–462, and 485–505; these read LAPE…DLIL, IIGW…IWRM, LLKI…LGST, AEFY…ASSG, LVTL…LVGL, VVTG…LYGV, ALVY…IAAA, PTPV…AAVF, VFFA…VSAL, LLAL…AISV, VFYL…VTVI, AAAM…AGFF, WLVA…FGII, and TVIW…GPLM.

This sequence belongs to the complex I subunit 2 family. In terms of assembly, NDH-1 is composed of 14 different subunits. Subunits NuoA, H, J, K, L, M, N constitute the membrane sector of the complex.

It is found in the cell membrane. It carries out the reaction a quinone + NADH + 5 H(+)(in) = a quinol + NAD(+) + 4 H(+)(out). In terms of biological role, NDH-1 shuttles electrons from NADH, via FMN and iron-sulfur (Fe-S) centers, to quinones in the respiratory chain. The immediate electron acceptor for the enzyme in this species is believed to be a menaquinone. Couples the redox reaction to proton translocation (for every two electrons transferred, four hydrogen ions are translocated across the cytoplasmic membrane), and thus conserves the redox energy in a proton gradient. The chain is NADH-quinone oxidoreductase subunit N from Paenibacillus sp. (strain JDR-2).